A 72-amino-acid polypeptide reads, in one-letter code: uncharacterized protein (72 aa).

The protein belongs to the ycf76 family.

The protein resides in the plastid. The protein localises to the chloroplast. This is an uncharacterized protein from Oryza nivara (Indian wild rice).